We begin with the raw amino-acid sequence, 361 residues long: Spermatogenesis-associated protein 17 (361 aa).

IQ domains follow at residues Glu-32–Ile-61, Leu-55–Tyr-84, and Tyr-91–Tyr-120.

It localises to the cytoplasm. This chain is Spermatogenesis-associated protein 17 (SPATA17), found in Homo sapiens (Human).